We begin with the raw amino-acid sequence, 193 residues long: Epididymal-specific lipocalin-12 (193 aa).

Residues 1-19 form the signal peptide; sequence MGPWWALWLILTLPQILGG. Residues Cys-88 and Cys-193 are joined by a disulfide bond. Asn-143 and Asn-172 each carry an N-linked (GlcNAc...) asparagine glycan.

The protein belongs to the calycin superfamily. Lipocalin family. As to quaternary structure, monomer.

The protein localises to the secreted. Binds all-trans retinoic acid and may act as a retinoid carrier protein within the epididymis. May play a role in male fertility. This is Epididymal-specific lipocalin-12 (Lcn12) from Rattus norvegicus (Rat).